We begin with the raw amino-acid sequence, 378 residues long: MGLDLLSTYAPGIFDSLLTWKGVAGLVVAITLGYLIISRLPGQKSRPKLLDLKTGGISFEKVAAVYDDYDKSYGEGDHGELHVKDKNKVFQLANTFYDFVTDGYEWAWGSSFHFSQRMPGLSHAASQMLHESRMASFLRLKPGMKCLDVGCGVGNPGRTVASCSGAEVTGITINEYQIKRAEYHNKRTGLVGYFKPVVGNFCAMPFKDKTFDAAFAMDSTCHAPKLEDVYSEVFRVLKPGGLFATYEWVSTKDYDPNNSRHVKVMNSIIFGNGLPNIRSWKQAEDAGKNVGFKLVTSFDLATAPPVGKPWYYVPELMVKYGLLTIQKALVRGACNVGLLPNEGWKVCNMVADMVPNLVEGGATNIFTPMHLLIFEKPK.

Residues leucine 17 to isoleucine 37 traverse the membrane as a helical segment.

Belongs to the class I-like SAM-binding methyltransferase superfamily. Erg6/SMT family.

It localises to the microsome membrane. The catalysed reaction is squalene + 2 S-adenosyl-L-methionine = 3,22-dimethyl-1,2,23,24-tetradehydro-2,3,22,23-tetrahydrosqualene + 2 S-adenosyl-L-homocysteine + 2 H(+). Converts squalene to mono- and dimethyl derivatives, but not to tri- and tetramethylated products. Unable to methylate cycloartenol, zymosterol or lanosterol. Methylates both C-3 and C22 positions, but only C-3 position in monomethylated products. Produces mainly dimethylated squalene. The sequence is that of Squalene methyltransferase 1 (TMT-1) from Botryococcus braunii (Green alga).